The chain runs to 112 residues: Large ribosomal subunit protein uL22 (112 aa).

The protein belongs to the universal ribosomal protein uL22 family. In terms of assembly, part of the 50S ribosomal subunit.

This protein binds specifically to 23S rRNA; its binding is stimulated by other ribosomal proteins, e.g. L4, L17, and L20. It is important during the early stages of 50S assembly. It makes multiple contacts with different domains of the 23S rRNA in the assembled 50S subunit and ribosome. Functionally, the globular domain of the protein is located near the polypeptide exit tunnel on the outside of the subunit, while an extended beta-hairpin is found that lines the wall of the exit tunnel in the center of the 70S ribosome. This is Large ribosomal subunit protein uL22 from Sorangium cellulosum (strain So ce56) (Polyangium cellulosum (strain So ce56)).